We begin with the raw amino-acid sequence, 485 residues long: Two-component response regulator ORR31 (485 aa).

The 126-residue stretch at 13 to 138 folds into the Response regulatory domain; it reads RVMPVDGDTK…TMAQLWRVVA (126 aa). Residue Asp-66 is modified to 4-aspartylphosphate. Polar residues predominate over residues 195-204; the sequence is LTINVDSGSS. The disordered stretch occupies residues 195–236; the sequence is LTINVDSGSSDGADANPRQKLEHKKDAKGPLGQHVASHLQPQ. Over residues 211 to 222 the composition is skewed to basic and acidic residues; that stretch reads PRQKLEHKKDAK.

The protein belongs to the ARR family. Type-B subfamily. Post-translationally, two-component system major event consists of a His-to-Asp phosphorelay between a sensor histidine kinase (HK) and a response regulator (RR). In plants, the His-to-Asp phosphorelay involves an additional intermediate named Histidine-containing phosphotransfer protein (HPt). This multistep phosphorelay consists of a His-Asp-His-Asp sequential transfer of a phosphate group between first a His and an Asp of the HK protein, followed by the transfer to a conserved His of the HPt protein and finally the transfer to an Asp in the receiver domain of the RR protein.

In terms of biological role, functions as a response regulator involved in His-to-Asp phosphorelay signal transduction system. Phosphorylation of the Asp residue in the receiver domain activates the ability of the protein to promote the transcription of target genes. May directly activate some type-A response regulators in response to cytokinins. The protein is Two-component response regulator ORR31 of Oryza sativa subsp. japonica (Rice).